We begin with the raw amino-acid sequence, 657 residues long: Trifunctional protein RibF/MnmA (657 aa).

The FMN adenylyltransferase stretch occupies residues 1–141 (MLSIINLTSK…VVKKDHCSTS (141 aa)). A riboflavin kinase region spans residues 158 to 282 (LLLTPFYLKG…DKKAALSFFH (125 aa)). The tract at residues 283–657 (KQEKPKVVVA…GGGKITKIIK (375 aa)) is tRNA-specific 2-thiouridylase MnmA. ATP-binding positions include 292–299 (ALSGGVDS) and methionine 318. Residues 389 to 391 (NPD) form an interaction with target base in tRNA region. Cysteine 394 serves as the catalytic Nucleophile. The cysteines at positions 394 and 492 are disulfide-linked. Glycine 420 lines the ATP pocket. The tract at residues 442 to 444 (KDQ) is interaction with tRNA. The Cysteine persulfide intermediate role is filled by cysteine 492.

The protein in the N-terminal section; belongs to the RibF family. This sequence in the C-terminal section; belongs to the MnmA/TRMU family.

It localises to the cytoplasm. It carries out the reaction riboflavin + ATP = FMN + ADP + H(+). The catalysed reaction is FMN + ATP + H(+) = FAD + diphosphate. It catalyses the reaction S-sulfanyl-L-cysteinyl-[protein] + uridine(34) in tRNA + AH2 + ATP = 2-thiouridine(34) in tRNA + L-cysteinyl-[protein] + A + AMP + diphosphate + H(+). The protein operates within cofactor biosynthesis; FAD biosynthesis; FAD from FMN: step 1/1. It functions in the pathway cofactor biosynthesis; FMN biosynthesis; FMN from riboflavin (ATP route): step 1/1. Functionally, involved in FAD and FMN biosynthesis. In terms of biological role, catalyzes the 2-thiolation of uridine at the wobble position (U34) of tRNA, leading to the formation of s(2)U34. The sequence is that of Trifunctional protein RibF/MnmA (ribF/mnmA) from Mycoplasmoides gallisepticum (strain R(low / passage 15 / clone 2)) (Mycoplasma gallisepticum).